Consider the following 599-residue polypeptide: Aspartate--tRNA(Asp/Asn) ligase (599 aa).

Glu173 is an L-aspartate binding site. Positions 197-200 (QLYK) are aspartate. Residue Arg219 participates in L-aspartate binding. ATP is bound by residues 219–221 (RDE) and Gln228. Position 451 (His451) interacts with L-aspartate. An ATP-binding site is contributed by Glu484. Arg491 contributes to the L-aspartate binding site. An ATP-binding site is contributed by 536–539 (GLDR).

It belongs to the class-II aminoacyl-tRNA synthetase family. Type 1 subfamily. As to quaternary structure, homodimer.

The protein localises to the cytoplasm. It carries out the reaction tRNA(Asx) + L-aspartate + ATP = L-aspartyl-tRNA(Asx) + AMP + diphosphate. Its function is as follows. Aspartyl-tRNA synthetase with relaxed tRNA specificity since it is able to aspartylate not only its cognate tRNA(Asp) but also tRNA(Asn). Reaction proceeds in two steps: L-aspartate is first activated by ATP to form Asp-AMP and then transferred to the acceptor end of tRNA(Asp/Asn). The polypeptide is Aspartate--tRNA(Asp/Asn) ligase (Methylococcus capsulatus (strain ATCC 33009 / NCIMB 11132 / Bath)).